An 811-amino-acid polypeptide reads, in one-letter code: Probable phosphoketolase (811 aa).

The protein belongs to the XFP family. Requires thiamine diphosphate as cofactor.

The protein is Probable phosphoketolase of Methylococcus capsulatus (strain ATCC 33009 / NCIMB 11132 / Bath).